A 416-amino-acid polypeptide reads, in one-letter code: Vacuole membrane protein KMS1 (416 aa).

Position 2 is an N-acetylglycine (Gly2). Topologically, residues 2–60 are cytoplasmic; that stretch reads GSAGVASSSSDVAISALREKHEKEVENLTLTTQPLNTLKLFVEATIQYIKRSISYLLAH. A helical transmembrane segment spans residues 61–81; the sequence is GGWFILITTLLVVSGGLLVTV. The Lumenal segment spans residues 82–101; that stretch reads DGPHGKHVEEVLEYVRYGLW. Residues 102-124 traverse the membrane as a helical segment; that stretch reads WIALGVASSIGLGSGLHTFVLYL. Topologically, residues 125 to 257 are cytoplasmic; the sequence is GPHIALFTLK…WLLTHSQHLN (133 aa). Residues 258 to 278 traverse the membrane as a helical segment; the sequence is FFTVLVLASVPNPLFDLAGIM. Residues 279 to 289 are Lumenal-facing; it reads CGQFGIPFWEF. The chain crosses the membrane as a helical span at residues 290 to 312; it reads FLATLIGKAIIKTHIQTIFIICV. At 313-323 the chain is on the cytoplasmic side; sequence CNNQLLDWMEN. The chain crosses the membrane as a helical span at residues 324–344; that stretch reads ELIWILSHVPGLASMLPGLTA. Residues 345 to 372 lie on the Lumenal side of the membrane; that stretch reads KLHAMKEKYIDAPSPVPSHIKVKKWDFS. A helical transmembrane segment spans residues 373-393; that stretch reads FASIWNGIVWLMLLNFFVKIV. The Cytoplasmic portion of the chain corresponds to 394 to 416; it reads TATAQRHLKKKQEKEMATLTHSD.

It belongs to the VMP1 family.

Its subcellular location is the endoplasmic reticulum membrane. Involved in the early secretory pathway. Required for the correct export of secretory products from the endoplasmic reticulum (ER) and involved in the maintenance of ER integrity. The chain is Vacuole membrane protein KMS1 from Arabidopsis thaliana (Mouse-ear cress).